The sequence spans 543 residues: Chaperonin GroEL 1 (543 aa).

ATP is bound by residues 29–32 (TLGP), lysine 50, 86–90 (DGTTT), glycine 414, and aspartate 493. A disordered region spans residues 524–543 (KEDKGAPAGMGGMPPGGGMY). A compositionally biased stretch (gly residues) spans 531–543 (AGMGGMPPGGGMY).

It belongs to the chaperonin (HSP60) family. In terms of assembly, forms a cylinder of 14 subunits composed of two heptameric rings stacked back-to-back. Interacts with the co-chaperonin GroES.

The protein resides in the cytoplasm. The catalysed reaction is ATP + H2O + a folded polypeptide = ADP + phosphate + an unfolded polypeptide.. In terms of biological role, together with its co-chaperonin GroES, plays an essential role in assisting protein folding. The GroEL-GroES system forms a nano-cage that allows encapsulation of the non-native substrate proteins and provides a physical environment optimized to promote and accelerate protein folding. This chain is Chaperonin GroEL 1, found in Syntrophobacter fumaroxidans (strain DSM 10017 / MPOB).